The following is a 92-amino-acid chain: Small ribosomal subunit protein uS19c (92 aa).

It belongs to the universal ribosomal protein uS19 family.

The protein resides in the plastid. Functionally, protein S19 forms a complex with S13 that binds strongly to the 16S ribosomal RNA. This chain is Small ribosomal subunit protein uS19c, found in Cuscuta gronovii (Common dodder).